A 128-amino-acid polypeptide reads, in one-letter code: Small ribosomal subunit protein bS16 (128 aa).

The segment at 107–128 (AAEAKAAAANESDDSGTDSTES) is disordered. Over residues 117 to 128 (ESDDSGTDSTES) the composition is skewed to acidic residues.

Belongs to the bacterial ribosomal protein bS16 family.

In Synechococcus sp. (strain CC9311), this protein is Small ribosomal subunit protein bS16.